The following is a 427-amino-acid chain: Glutamate-1-semialdehyde 2,1-aminomutase (427 aa).

Lys-265 bears the N6-(pyridoxal phosphate)lysine mark.

This sequence belongs to the class-III pyridoxal-phosphate-dependent aminotransferase family. HemL subfamily. In terms of assembly, homodimer. The cofactor is pyridoxal 5'-phosphate.

Its subcellular location is the cytoplasm. It carries out the reaction (S)-4-amino-5-oxopentanoate = 5-aminolevulinate. It participates in porphyrin-containing compound metabolism; protoporphyrin-IX biosynthesis; 5-aminolevulinate from L-glutamyl-tRNA(Glu): step 2/2. The protein is Glutamate-1-semialdehyde 2,1-aminomutase of Burkholderia cenocepacia (strain HI2424).